We begin with the raw amino-acid sequence, 340 residues long: UDP-N-acetylglucosamine--N-acetylmuramyl-(pentapeptide) pyrophosphoryl-undecaprenol N-acetylglucosamine transferase (340 aa).

Residues 10–12 (TGG), N124, S179, and Q277 contribute to the UDP-N-acetyl-alpha-D-glucosamine site.

Belongs to the glycosyltransferase 28 family. MurG subfamily.

Its subcellular location is the cell inner membrane. The enzyme catalyses di-trans,octa-cis-undecaprenyl diphospho-N-acetyl-alpha-D-muramoyl-L-alanyl-D-glutamyl-meso-2,6-diaminopimeloyl-D-alanyl-D-alanine + UDP-N-acetyl-alpha-D-glucosamine = di-trans,octa-cis-undecaprenyl diphospho-[N-acetyl-alpha-D-glucosaminyl-(1-&gt;4)]-N-acetyl-alpha-D-muramoyl-L-alanyl-D-glutamyl-meso-2,6-diaminopimeloyl-D-alanyl-D-alanine + UDP + H(+). Its pathway is cell wall biogenesis; peptidoglycan biosynthesis. Its function is as follows. Cell wall formation. Catalyzes the transfer of a GlcNAc subunit on undecaprenyl-pyrophosphoryl-MurNAc-pentapeptide (lipid intermediate I) to form undecaprenyl-pyrophosphoryl-MurNAc-(pentapeptide)GlcNAc (lipid intermediate II). In Sulfurimonas denitrificans (strain ATCC 33889 / DSM 1251) (Thiomicrospira denitrificans (strain ATCC 33889 / DSM 1251)), this protein is UDP-N-acetylglucosamine--N-acetylmuramyl-(pentapeptide) pyrophosphoryl-undecaprenol N-acetylglucosamine transferase.